Here is a 556-residue protein sequence, read N- to C-terminus: Glutamine--tRNA ligase (556 aa).

Positions 34 to 44 (PEPNGYLHIGH) match the 'HIGH' region motif. ATP is bound by residues 35-37 (EPN) and 41-47 (HIGHAKS). Residues aspartate 67 and tyrosine 212 each coordinate L-glutamine. Residues threonine 231, 261 to 262 (RL), and 269 to 271 (MSK) each bind ATP. Residues 268-272 (VMSKR) carry the 'KMSKS' region motif.

This sequence belongs to the class-I aminoacyl-tRNA synthetase family. As to quaternary structure, monomer.

It localises to the cytoplasm. The catalysed reaction is tRNA(Gln) + L-glutamine + ATP = L-glutaminyl-tRNA(Gln) + AMP + diphosphate. The chain is Glutamine--tRNA ligase from Vibrio campbellii (strain ATCC BAA-1116).